We begin with the raw amino-acid sequence, 58 residues long: Teratocyte protein CftICK-III (58 aa).

A signal peptide spans 1–24 (MQKFMRLFFLGLFFILFMTTQIKA). 3 cysteine pairs are disulfide-bonded: Cys27/Cys42, Cys34/Cys47, and Cys41/Cys55.

In terms of tissue distribution, abundantly expressed by teratocytes, which are extra-embryonic cells released by parasitoid wasps into their hosts during larval eclosion.

It localises to the secreted. This endoparasitoid wasp peptide has immununosuppressive and insecticidal activities. Suppress cellular immunity which is detectable as a reduction of hemocyte encapsulation in the host. In vivo, ingestion of this peptide (probably at excessive doses) increases larval mortality and reduces leaf consumption in both lepidopteran species D.saccharalis and S.frugiperda, which are permissive and non-permissive hosts for C.flavipes, respectively. This Cotesia flavipes (Parasitic wasp) protein is Teratocyte protein CftICK-III.